A 433-amino-acid chain; its full sequence is Histidinol dehydrogenase (433 aa).

Positions 133, 194, and 217 each coordinate NAD(+). Residues Ser240, Gln262, and His265 each contribute to the substrate site. Positions 262 and 265 each coordinate Zn(2+). Active-site proton acceptor residues include Glu330 and His331. Positions 331, 364, 418, and 423 each coordinate substrate. Zn(2+) is bound at residue Asp364. A Zn(2+)-binding site is contributed by His423.

Belongs to the histidinol dehydrogenase family. Requires Zn(2+) as cofactor.

It catalyses the reaction L-histidinol + 2 NAD(+) + H2O = L-histidine + 2 NADH + 3 H(+). Its pathway is amino-acid biosynthesis; L-histidine biosynthesis; L-histidine from 5-phospho-alpha-D-ribose 1-diphosphate: step 9/9. In terms of biological role, catalyzes the sequential NAD-dependent oxidations of L-histidinol to L-histidinaldehyde and then to L-histidine. The sequence is that of Histidinol dehydrogenase from Hydrogenovibrio crunogenus (strain DSM 25203 / XCL-2) (Thiomicrospira crunogena).